The sequence spans 577 residues: Vacuolar protein sorting-associated protein 45 (577 aa).

This sequence belongs to the STXBP/unc-18/SEC1 family. In terms of assembly, interacts with PEP7 and TLG2.

It localises to the cytoplasm. The protein localises to the vacuole membrane. Functionally, essential for vacuolar protein sorting. Function in membrane traffic between the Golgi and the vacuole. The chain is Vacuolar protein sorting-associated protein 45 (VPS45) from Saccharomyces cerevisiae (strain ATCC 204508 / S288c) (Baker's yeast).